Reading from the N-terminus, the 248-residue chain is Ubiquinone biosynthesis O-methyltransferase (248 aa).

S-adenosyl-L-methionine-binding residues include Arg-41, Gly-72, Asp-93, and Met-136.

This sequence belongs to the methyltransferase superfamily. UbiG/COQ3 family.

It carries out the reaction a 3-demethylubiquinol + S-adenosyl-L-methionine = a ubiquinol + S-adenosyl-L-homocysteine + H(+). It catalyses the reaction a 3-(all-trans-polyprenyl)benzene-1,2-diol + S-adenosyl-L-methionine = a 2-methoxy-6-(all-trans-polyprenyl)phenol + S-adenosyl-L-homocysteine + H(+). The protein operates within cofactor biosynthesis; ubiquinone biosynthesis. Functionally, O-methyltransferase that catalyzes the 2 O-methylation steps in the ubiquinone biosynthetic pathway. This is Ubiquinone biosynthesis O-methyltransferase from Bartonella bacilliformis (strain ATCC 35685 / KC583 / Herrer 020/F12,63).